The primary structure comprises 87 residues: Monogrin 1 (87 aa).

A BPTI/Kunitz inhibitor domain is found at 8–62; that stretch reads CGYLMMRGCRGDTTATRAWGFNYEEKKCQQETVICGTGGAPRNAFETKQDCDALC. Cystine bridges form between Cys-8–Cys-62, Cys-16–Cys-42, and Cys-35–Cys-58. The Cell attachment site motif lies at 17–19; that stretch reads RGD.

The N-terminus is blocked. Expressed in salivary glands.

The protein localises to the cytoplasmic vesicle. Its subcellular location is the secretory vesicle. The protein resides in the secreted. Tick salivary platelet aggregation inhibitor that plays an important part in the anti-hemostatic strategy of ticks. Inhibits platelet aggregation induced by ADP (IC(50)~150 nM), collagen, and platelet activating factor (PAF). Acts by binding to platelet membrane glycoprotein IIb-IIIa (ITGA2B/ITGB3) in a metal ion dependent manner. Does not inhibit aggregation induced by ristocecin, an agonist that aggregates platelets independently from the glycoprotein IIb-IIIa (ITGA2B/ITGB3). In contrast to other tick platelet aggregation inhibitors, this protein does not protect ITGA2B/ITGB3 from dissociation under SDS condition, suggesting it may dissocate much faster than its orthologs. This Argas monolakensis (Mono lake bird tick) protein is Monogrin 1.